The primary structure comprises 147 residues: UPF0047 protein sll1880 (147 aa).

The protein belongs to the UPF0047 family.

This Synechocystis sp. (strain ATCC 27184 / PCC 6803 / Kazusa) protein is UPF0047 protein sll1880.